Reading from the N-terminus, the 549-residue chain is GATA-type transcription factor sreA (549 aa).

The segment at 40 to 100 (AQAGREHPQD…TSPKSQKDTS (61 aa)) is disordered. 2 stretches are compositionally biased toward basic and acidic residues: residues 43–72 (GREH…HEGE) and 86–97 (HHVEKTSPKSQK). The GATA-type 1 zinc finger occupies 106–130 (CSNCGTKSTPLWRRSPTGAMICNAC). The tract at residues 141–174 (RPTKRNRTQASPEAYHPQNQSVGSQPDPAVTGSE) is disordered. Residues 180–198 (CPGGGNCNGTGGAEGCDGC) form a cystein-rich region (CRR) region. Residues 223–244 (GNSDAVPSPEAEAPARNSGQPE) are disordered. A GATA-type 2 zinc finger spans residues 251-275 (CQNCGTTVTPLWRRDENGHPICNAC). Disordered regions lie at residues 306–332 (RENS…PATL), 375–459 (NSGA…RLSS), and 482–535 (LGRQ…MREQ). A compositionally biased stretch (low complexity) spans 309-331 (SPTAATHSSHGSSASPEASSPAT). A compositionally biased stretch (pro residues) spans 383-396 (HHPPPPRLLEPGHP). Low complexity predominate over residues 485-497 (QQQSQPHHPQSSP). Positions 498–515 (LAPTQAASQSLPGVSNMD) are enriched in polar residues. The stretch at 511–549 (VSNMDNHVEDRRAKLQREAEEMREQLRAKERELAELAGQ) forms a coiled coil. Residues 516-535 (NHVEDRRAKLQREAEEMREQ) show a composition bias toward basic and acidic residues.

The protein resides in the nucleus. GATA-type transcription repressor that regulates iron- acquisition genes through specific binding GATA sequence elements of target promoters. Iron acquisition regulation is critical for survival under both iron-limiting conditions (to acquire essential iron) and iron-replete conditions (to limit iron toxicity). SreA targets include genes encoding a number of key iron-regulated factors such as those involved in siderophore biosynthesis. This is GATA-type transcription factor sreA from Emericella nidulans (strain FGSC A4 / ATCC 38163 / CBS 112.46 / NRRL 194 / M139) (Aspergillus nidulans).